A 558-amino-acid chain; its full sequence is N-acetylglucosamine-6-O-sulfatase (558 aa).

S101 is subject to 3-oxoalanine (Ser).

This sequence belongs to the sulfatase family. Post-translationally, the conversion to 3-oxoalanine (also known as C-formylglycine, FGly), of a serine or cysteine residue in prokaryotes and of a cysteine residue in eukaryotes, is critical for catalytic activity.

Functionally, exosulfatase involved in the degradation of the glycosaminoglycan (GAG) heparan sulfate (HS). Catalyzes the hydrolysis of the 6-sulfate groups of the N-acetyl-D-glucosamine 6-sulfate units. GAG-specific sulfatases play a key role in the persistence of the major human gut symbiont B.thetaiotaomicron in the host gastrointestinal tract. This chain is N-acetylglucosamine-6-O-sulfatase, found in Bacteroides thetaiotaomicron (strain ATCC 29148 / DSM 2079 / JCM 5827 / CCUG 10774 / NCTC 10582 / VPI-5482 / E50).